Reading from the N-terminus, the 282-residue chain is HTH-type transcriptional activator RhaR (282 aa).

Residues 179–277 (DKLITALAGS…GMTPVQWRHR (99 aa)) enclose the HTH araC/xylS-type domain. 2 DNA-binding regions (H-T-H motif) span residues 196-217 (EKFC…RTQT) and 244-267 (VSEV…NREV).

In terms of assembly, binds DNA as a dimer.

It localises to the cytoplasm. In terms of biological role, activates expression of the rhaSR operon in response to L-rhamnose. The polypeptide is HTH-type transcriptional activator RhaR (Enterobacter sp. (strain 638)).